The chain runs to 319 residues: ATP-dependent 6-phosphofructokinase (319 aa).

Glycine 11 contributes to the ATP binding site. ADP is bound at residue 21 to 25 (RAVVR). ATP contacts are provided by residues 72–73 (RC) and 102–105 (GDGS). Aspartate 103 is a binding site for Mg(2+). 125–127 (TID) lines the substrate pocket. The Proton acceptor role is filled by aspartate 127. Position 154 (arginine 154) interacts with ADP. Substrate-binding positions include arginine 162 and 169–171 (MGR). Residues 185–187 (GAE), arginine 211, and 213–215 (KKH) contribute to the ADP site. Residues glutamate 222, arginine 243, and 249–252 (HIQR) contribute to the substrate site.

Belongs to the phosphofructokinase type A (PFKA) family. ATP-dependent PFK group I subfamily. Prokaryotic clade 'B1' sub-subfamily. Homotetramer. Requires Mg(2+) as cofactor.

It is found in the cytoplasm. The enzyme catalyses beta-D-fructose 6-phosphate + ATP = beta-D-fructose 1,6-bisphosphate + ADP + H(+). It functions in the pathway carbohydrate degradation; glycolysis; D-glyceraldehyde 3-phosphate and glycerone phosphate from D-glucose: step 3/4. With respect to regulation, allosterically activated by ADP and other diphosphonucleosides, and allosterically inhibited by phosphoenolpyruvate. Functionally, catalyzes the phosphorylation of D-fructose 6-phosphate to fructose 1,6-bisphosphate by ATP, the first committing step of glycolysis. This is ATP-dependent 6-phosphofructokinase from Halalkalibacterium halodurans (strain ATCC BAA-125 / DSM 18197 / FERM 7344 / JCM 9153 / C-125) (Bacillus halodurans).